A 357-amino-acid chain; its full sequence is Inositol-tetrakisphosphate 1-kinase 3 (357 aa).

1D-myo-inositol 1,3,4-trisphosphate-binding residues include K56 and K98. The ATP site is built by R133 and K183. Positions 190 and 222 each coordinate 1D-myo-inositol 1,3,4-trisphosphate. ATP-binding positions include 211–222 (QEFVNHGGVLFK), S237, and S262. 3 residues coordinate Mg(2+): D302, D317, and N319. N319 provides a ligand contact to 1D-myo-inositol 1,3,4-trisphosphate.

It belongs to the ITPK1 family. Monomer. The cofactor is Mg(2+). As to expression, expressed in roots, leaves, flowers, anthers and embryos.

The catalysed reaction is 1D-myo-inositol 3,4,5,6-tetrakisphosphate + ATP = 1D-myo-inositol 1,3,4,5,6-pentakisphosphate + ADP + H(+). The enzyme catalyses 1D-myo-inositol 1,3,4-trisphosphate + ATP = 1D-myo-inositol 1,3,4,5-tetrakisphosphate + ADP + H(+). It catalyses the reaction 1D-myo-inositol 1,3,4-trisphosphate + ATP = 1D-myo-inositol 1,3,4,6-tetrakisphosphate + ADP + H(+). Its function is as follows. Kinase that can phosphorylate various inositol polyphosphate such as Ins(3,4,5,6)P4 or Ins(1,3,4)P3 and participates in phytic acid biosynthesis in developing seeds. Phytic acid is the primary storage form of phosphorus in cereal grains and other plant seeds. This Oryza sativa subsp. japonica (Rice) protein is Inositol-tetrakisphosphate 1-kinase 3.